Reading from the N-terminus, the 183-residue chain is Seminal plasma protein BSP-30 kDa (183 aa).

An N-terminal signal peptide occupies residues 1 to 25; it reads MAPLVGLFLIWAGASVFQQLHPVNG. The disordered stretch occupies residues 23-47; it reads VNGGDIPDPGSKPTPPGMADELPTE. O-linked (GalNAc...) threonine glycosylation is found at threonine 36, threonine 46, threonine 57, threonine 58, threonine 59, and threonine 64. 2 Fibronectin type-II domains span residues 92–136 and 137–183; these read FEGP…FCTE and RDEP…WKYC. Disulfide bonds link cysteine 97–cysteine 121, cysteine 111–cysteine 134, cysteine 142–cysteine 168, and cysteine 156–cysteine 183.

The protein belongs to the seminal plasma protein family.

Its subcellular location is the secreted. Binds to spermatozoa upon ejaculation and may play a role in sperm capacitation. Displays heparin-, gelatin- and phospholipid-binding activities. The polypeptide is Seminal plasma protein BSP-30 kDa (Bos taurus (Bovine)).